Consider the following 919-residue polypeptide: MWSRHRLYFIVAGVLFHLFYLWSIFDIYFVSPLVHGMKQHQSTDEAPAKRLFLIVGDGLRADTTFDKILHPVTGEHDYLAPYIRDLVRNEATYGVSHTRMPTESRPGHVAMIAGFYEDVSAVTKGWQENPVDFDSFFNQSKHTYSFGSPDILPMFKDGATPNKVDAWMYGHEFEDFTQSSIELDAFVFRHIYELFNNTKSNKTLETEIKQDGNVFFLHLLGCDTAGHSYRPYSAEYYDNVKYIDKEVKLLVEKVHEFFDDEDTAFIFTADHGMSAFGSHGDGHPNNTRTPLVAWGAGINKPVKNQAPIFDNYTENWNLADIKRNDVNQADIASLMSYLIGANYPVNSVGELPLNFIDAPEDKKLNALFNNAKAILEQYLVKEQEIIASQFVYKEYEAFVEIPYQEYLQQIESLIERIAKGENELEPDAIKLTEELMKVTLDGLAYLTTYNWRFIRTIVTLGFLGWIVYSFSIFLRLFILNRDYNSHKSLLNYFIFGSLTIILNYVLYYQKAPFNYYMYLFFPLIFWSEIFTDRVVLDDGVKEFLKGISIPKRIILVSAIILVYESIVYAFFDRWIFSLIFNMLSFYPLICGYRDWKRNTLWFITGAAISVFTLLDAVKIESLTQINIASGLIVLTALSGFLHLRKQLNSYTTTVFICQILLVILMVLATNKSIVSLQNRTGLPRDAQVAGWVILVVSLLLMPLIHYMKPNNNYKVRMLIIFLTFAPTFIILTISFESFFYLVFSAYIVQWIEIESKLKEQTPNTSHYKQLIRVTIIGFFLLQNAFFGTGNVASISSFSLDSVYRLMPIFDPFPMGALLVIKLIIPYIILSAGLGILNLKLHIKDYTISTLIISTSDILSLNFFYLLKTEGSWLDIGITISNYCLAILSSLFMLILEIVAHVVLKNVQLSKPVIASKKTN.

Over 1–8 (MWSRHRLY) the chain is Cytoplasmic. The chain crosses the membrane as a helical span at residues 9–29 (FIVAGVLFHLFYLWSIFDIYF). Topologically, residues 30–456 (VSPLVHGMKQ…TTYNWRFIRT (427 aa)) are lumenal. Residues asparagine 138, asparagine 196, asparagine 201, asparagine 285, and asparagine 311 are each glycosylated (N-linked (GlcNAc...) asparagine). Residues 457–477 (IVTLGFLGWIVYSFSIFLRLF) traverse the membrane as a helical segment. At 478 to 487 (ILNRDYNSHK) the chain is on the cytoplasmic side. Residues 488–508 (SLLNYFIFGSLTIILNYVLYY) traverse the membrane as a helical segment. Topologically, residues 509 to 510 (QK) are lumenal. The chain crosses the membrane as a helical span at residues 511 to 531 (APFNYYMYLFFPLIFWSEIFT). Topologically, residues 532-558 (DRVVLDDGVKEFLKGISIPKRIILVSA) are cytoplasmic. The helical transmembrane segment at 559-579 (IILVYESIVYAFFDRWIFSLI) threads the bilayer. At 580-598 (FNMLSFYPLICGYRDWKRN) the chain is on the lumenal side. A helical membrane pass occupies residues 599–619 (TLWFITGAAISVFTLLDAVKI). Glutamate 620 is a topological domain (cytoplasmic). A helical transmembrane segment spans residues 621 to 641 (SLTQINIASGLIVLTALSGFL). The Lumenal segment spans residues 642–653 (HLRKQLNSYTTT). A helical membrane pass occupies residues 654 to 674 (VFICQILLVILMVLATNKSIV). Residues 675–686 (SLQNRTGLPRDA) lie on the Cytoplasmic side of the membrane. Residues 687–707 (QVAGWVILVVSLLLMPLIHYM) form a helical membrane-spanning segment. Over 708–718 (KPNNNYKVRML) the chain is Lumenal. A helical membrane pass occupies residues 719–739 (IIFLTFAPTFIILTISFESFF). Residues 740–773 (YLVFSAYIVQWIEIESKLKEQTPNTSHYKQLIRV) are Cytoplasmic-facing. A helical transmembrane segment spans residues 774 to 794 (TIIGFFLLQNAFFGTGNVASI). Topologically, residues 795–815 (SSFSLDSVYRLMPIFDPFPMG) are lumenal. The helical transmembrane segment at 816–836 (ALLVIKLIIPYIILSAGLGIL) threads the bilayer. Over 837–845 (NLKLHIKDY) the chain is Cytoplasmic. The chain crosses the membrane as a helical span at residues 846–866 (TISTLIISTSDILSLNFFYLL). Residues 867 to 882 (KTEGSWLDIGITISNY) lie on the Lumenal side of the membrane. A helical membrane pass occupies residues 883–903 (CLAILSSLFMLILEIVAHVVL). The Cytoplasmic portion of the chain corresponds to 904 to 919 (KNVQLSKPVIASKKTN).

The protein belongs to the PIGG/PIGN/PIGO family. PIGN subfamily.

The protein localises to the endoplasmic reticulum membrane. The protein operates within glycolipid biosynthesis; glycosylphosphatidylinositol-anchor biosynthesis. Its function is as follows. Ethanolamine phosphate transferase involved in glycosylphosphatidylinositol-anchor biosynthesis. Transfers ethanolamine phosphate to the first alpha-1,4-linked mannose of the glycosylphosphatidylinositol precursor of GPI-anchor. This chain is GPI ethanolamine phosphate transferase 1 (MCD4), found in Kluyveromyces lactis (strain ATCC 8585 / CBS 2359 / DSM 70799 / NBRC 1267 / NRRL Y-1140 / WM37) (Yeast).